Consider the following 449-residue polypeptide: MFS acetylaranotin efflux transporter ataA (449 aa).

The next 7 membrane-spanning stretches (helical) occupy residues 6–26 (SVYV…TAIP), 45–65 (YLLV…YFPI), 67–87 (WVFL…GAAP), 115–135 (FYIN…FLHV), 155–175 (LGVV…QWGG), 182–202 (NGRI…FLAI), and 227–247 (LFMT…PIWF). Asn252 carries N-linked (GlcNAc...) asparagine glycosylation. The next 5 helical transmembrane spans lie at 260–280 (IMCL…GGGV), 287–307 (VPFF…MTTF), 321–341 (VLLG…VQAV), 349–369 (VGTA…VSVA), and 420–440 (ALVS…LGAV).

It belongs to the major facilitator superfamily.

The protein localises to the cell membrane. Efflux pump that may provide the dual role of acetylaranotin export and self-protection by allowing the fungus to evade the harmful effect of its own acetylaranotin production. In Aspergillus terreus (strain NIH 2624 / FGSC A1156), this protein is MFS acetylaranotin efflux transporter ataA.